The chain runs to 120 residues: UPF0295 protein Aflv_0370 (120 aa).

The next 2 helical transmembrane spans lie at 12-32 and 42-62; these read IRTFALSLIFIGFFVMYGGIF and LFMILGLLFIIASTVVYFWIG.

Belongs to the UPF0295 family.

The protein resides in the cell membrane. The chain is UPF0295 protein Aflv_0370 from Anoxybacillus flavithermus (strain DSM 21510 / WK1).